A 396-amino-acid polypeptide reads, in one-letter code: Probable sugar efflux transporter (396 aa).

12 helical membrane-spanning segments follow: residues 15–35 (VVTLAIAAFIFNTTEFVPVGL), 50–70 (VGIMLTIYAWVVAVMSLPFML), 81–101 (LICLFVLFIASHVLSFLAWNF), 103–123 (VLVISRIGIAFAHAIFWSITA), 136–156 (AQALSLIATGTALAMVLGLPI), 169–189 (TFFAIGMGALITLLCLIKLLP), 209–229 (PALMSLYVLTVVVVTAHYTAY), 246–266 (FATVLLLILGGAGIIGSLVFG), 275–295 (SLVSIAIALLVVCLLLLLPAA), 301–321 (LAILSIFWGIAIMVIGLGMQV), 333–353 (VAMALFSGIFNIGIGAGALVG), and 364–384 (AIGYIGDIPACAALVWAVLIF).

Belongs to the major facilitator superfamily. SotB (TC 2.A.1.2) family.

It localises to the cell inner membrane. Functionally, involved in the efflux of sugars. The physiological role may be the reduction of the intracellular concentration of toxic sugars or sugar metabolites. The polypeptide is Probable sugar efflux transporter (Salmonella paratyphi C (strain RKS4594)).